The chain runs to 1005 residues: Isoleucine--tRNA ligase (1005 aa).

A 'HIGH' region motif is present at residues 70-80 (PYANGNIHIGH). Glutamate 629 provides a ligand contact to L-isoleucyl-5'-AMP. The short motif at 670–674 (KMSKS) is the 'KMSKS' region element. Residue lysine 673 participates in ATP binding.

This sequence belongs to the class-I aminoacyl-tRNA synthetase family. IleS type 1 subfamily. As to quaternary structure, monomer.

It is found in the cytoplasm. The catalysed reaction is tRNA(Ile) + L-isoleucine + ATP = L-isoleucyl-tRNA(Ile) + AMP + diphosphate. Its function is as follows. Catalyzes the attachment of isoleucine to tRNA(Ile). As IleRS can inadvertently accommodate and process structurally similar amino acids such as valine, to avoid such errors it has two additional distinct tRNA(Ile)-dependent editing activities. One activity is designated as 'pretransfer' editing and involves the hydrolysis of activated Val-AMP. The other activity is designated 'posttransfer' editing and involves deacylation of mischarged Val-tRNA(Ile). The polypeptide is Isoleucine--tRNA ligase (Rhodopseudomonas palustris (strain ATCC BAA-98 / CGA009)).